The sequence spans 315 residues: Rhomboid-related protein 4 (315 aa).

At Met-1–His-21 the chain is on the cytoplasmic side. A helical membrane pass occupies residues Val-22 to Phe-42. The Extracellular portion of the chain corresponds to Leu-43–Tyr-106. A helical membrane pass occupies residues Val-107–Ala-127. At Glu-128–Ser-138 the chain is on the cytoplasmic side. A helical membrane pass occupies residues Cys-139 to Tyr-157. Ser-144 (nucleophile) is an active-site residue. Residues Cys-158–Leu-180 are Extracellular-facing. Residues Val-181–Val-201 traverse the membrane as a helical segment. His-195 is a catalytic residue. Over Gly-202 to Gln-315 the chain is Cytoplasmic. Positions Ser-269 to Asp-284 are ubiquitin-binding domain (UBD). Positions Trp-283–Gln-315 are disordered. Positions Ser-300–Gln-315 are enriched in basic and acidic residues. The interval Pro-301 to Gln-315 is VCP/p97-interacting motif (VIM).

Belongs to the peptidase S54 family. As to quaternary structure, interacts (via C-terminal domain) with VCP. Interacts with ubiquitin and ubiquitinated proteins. Interacts with BIK and STEAP3. Expressed strongly in testis.

The protein resides in the endoplasmic reticulum membrane. It localises to the mitochondrion membrane. The catalysed reaction is Cleaves type-1 transmembrane domains using a catalytic dyad composed of serine and histidine that are contributed by different transmembrane domains.. Its activity is regulated as follows. Inhibited by aprotinin. Functionally, intramembrane-cleaving serine protease that cleaves single transmembrane or multi-pass membrane proteins in the hydrophobic plane of the membrane, luminal loops and juxtamembrane regions. Involved in regulated intramembrane proteolysis and the subsequent release of functional polypeptides from their membrane anchors. Functional component of endoplasmic reticulum-associated degradation (ERAD) for misfolded membrane proteins. Required for the degradation process of some specific misfolded endoplasmic reticulum (ER) luminal proteins. Participates in the transfer of misfolded proteins from the ER to the cytosol, where they are destroyed by the proteasome in a ubiquitin-dependent manner. Functions in BIK, MPZ, PKD1, PTCRA, RHO, STEAP3 and TRAC processing. Involved in the regulation of exosomal secretion; inhibits the TSAP6-mediated secretion pathway. Involved in the regulation of apoptosis; modulates BIK-mediated apoptotic activity. Also plays a role in the regulation of spermatogenesis; inhibits apoptotic activity in spermatogonia. This Homo sapiens (Human) protein is Rhomboid-related protein 4 (RHBDD1).